Reading from the N-terminus, the 255-residue chain is tRNA pseudouridine synthase B (255 aa).

The active-site Nucleophile is the Asp52. The substrate site is built by Tyr80, Tyr183, and Leu204.

The protein belongs to the pseudouridine synthase TruB family. Type 1 subfamily.

It catalyses the reaction uridine(55) in tRNA = pseudouridine(55) in tRNA. Functionally, responsible for synthesis of pseudouridine from uracil-55 in the psi GC loop of transfer RNAs. The chain is tRNA pseudouridine synthase B from Blochmanniella floridana.